Reading from the N-terminus, the 174-residue chain is Large ribosomal subunit protein uL10 (174 aa).

The protein belongs to the universal ribosomal protein uL10 family. Part of the ribosomal stalk of the 50S ribosomal subunit. The N-terminus interacts with L11 and the large rRNA to form the base of the stalk. The C-terminus forms an elongated spine to which L12 dimers bind in a sequential fashion forming a multimeric L10(L12)X complex.

Its function is as follows. Forms part of the ribosomal stalk, playing a central role in the interaction of the ribosome with GTP-bound translation factors. The polypeptide is Large ribosomal subunit protein uL10 (Methylobacillus flagellatus (strain ATCC 51484 / DSM 6875 / VKM B-1610 / KT)).